The chain runs to 479 residues: Chromosomal replication initiator protein DnaA (479 aa).

The interval 1 to 74 (MFSGVVMAWQ…RSLTGVDSSI (74 aa)) is domain I, interacts with DnaA modulators. Residues 74 to 142 (ITDVRFLEKK…SVPKNNASIR (69 aa)) are domain II. The interval 143–360 (ALHPRYTFDE…SAITAIGARA (218 aa)) is domain III, AAA+ region. ATP contacts are provided by glycine 187, glycine 189, lysine 190, and serine 191. A domain IV, binds dsDNA region spans residues 361–479 (RLMGGYIDMN…NLLSDKVKQI (119 aa)).

This sequence belongs to the DnaA family. In terms of assembly, oligomerizes as a right-handed, spiral filament on DNA at oriC.

The protein localises to the cytoplasm. Its function is as follows. Plays an essential role in the initiation and regulation of chromosomal replication. ATP-DnaA binds to the origin of replication (oriC) to initiate formation of the DNA replication initiation complex once per cell cycle. Binds the DnaA box (a 9 base pair repeat at the origin) and separates the double-stranded (ds)DNA. Forms a right-handed helical filament on oriC DNA; dsDNA binds to the exterior of the filament while single-stranded (ss)DNA is stabiized in the filament's interior. The ATP-DnaA-oriC complex binds and stabilizes one strand of the AT-rich DNA unwinding element (DUE), permitting loading of DNA polymerase. After initiation quickly degrades to an ADP-DnaA complex that is not apt for DNA replication. Binds acidic phospholipids. This chain is Chromosomal replication initiator protein DnaA, found in Desulfotalea psychrophila (strain LSv54 / DSM 12343).